Consider the following 358-residue polypeptide: Tubulin-like protein TubZ (358 aa).

GDP-binding positions include 12–16 (QGGGN), T95, 99–101 (GTG), E132, N164, E170, and N174. GTP is bound at residue N182.

This sequence belongs to the FtsZ family. TubZ subfamily. Monomer. In the presence of Mg(2+) and GTP assembles into 2-stranded filaments which coalesce into bundles. Binds a centromere-like site (tubC)-TubR complex. The TubZ-TubR-tubC complex bind to TubY which reshapes the filament bundles into rings. A later paper by the same group shows 4-stranded filament formation and suggests the 2-stranded form is a short-lived intermediate.

Its subcellular location is the host cytoplasm. The enzyme catalyses GTP + H2O = GDP + phosphate + H(+). A tubulin-like, filament forming GTPase; the motor component of the type III partition system presumably used to ensure correct segregation of this bacteriophage. In the presence of Mg(2+) and GTP (or GTP-gamma-S) assembles into filaments which upon polymerization are almost exclusively bound to GDP. Filament formation is cooperative, requiring a critical concentration. Formation occurs very quickly and is followed by disassembly as GTP is consumed. Unlike its plasmid homolog in B.thuringiensis (AC Q8KNP3) GTP-gamma-S does not alter filament formation. When forced to assemble with GDP instead of GTP it makes much stiffer, thicker filaments. The filaments bind a DNA centromere-like site (tubC)-TubR complex which extends to surround the TubZ filaments. Highly dynamic filaments grow at the plus end and depolymerize at the minus end, a process called treadmilling. TubR-tubC complexes track the depolymerizing minus end of the filament, probably pulling phage DNA within the cell. The sequence is that of Tubulin-like protein TubZ from Clostridium botulinum C phage (Clostridium botulinum C bacteriophage).